We begin with the raw amino-acid sequence, 304 residues long: Acetyl-coenzyme A carboxylase carboxyl transferase subunit beta (304 aa).

The region spanning 23–292 (VWTKCDSCGQ…PNPDAPREGE (270 aa)) is the CoA carboxyltransferase N-terminal domain. Residues Cys-27, Cys-30, Cys-46, and Cys-49 each contribute to the Zn(2+) site. The segment at 27–49 (CDSCGQVLYRAELERNLEVCPKC) adopts a C4-type zinc-finger fold. The interval 281–304 (PAPNPDAPREGEVVPPVPDQEPEA) is disordered. Over residues 295–304 (PPVPDQEPEA) the composition is skewed to pro residues.

Belongs to the AccD/PCCB family. As to quaternary structure, acetyl-CoA carboxylase is a heterohexamer composed of biotin carboxyl carrier protein (AccB), biotin carboxylase (AccC) and two subunits each of ACCase subunit alpha (AccA) and ACCase subunit beta (AccD). It depends on Zn(2+) as a cofactor.

It localises to the cytoplasm. The catalysed reaction is N(6)-carboxybiotinyl-L-lysyl-[protein] + acetyl-CoA = N(6)-biotinyl-L-lysyl-[protein] + malonyl-CoA. It functions in the pathway lipid metabolism; malonyl-CoA biosynthesis; malonyl-CoA from acetyl-CoA: step 1/1. Functionally, component of the acetyl coenzyme A carboxylase (ACC) complex. Biotin carboxylase (BC) catalyzes the carboxylation of biotin on its carrier protein (BCCP) and then the CO(2) group is transferred by the transcarboxylase to acetyl-CoA to form malonyl-CoA. The sequence is that of Acetyl-coenzyme A carboxylase carboxyl transferase subunit beta from Citrobacter koseri (strain ATCC BAA-895 / CDC 4225-83 / SGSC4696).